The following is a 410-amino-acid chain: WD repeat and FYVE domain-containing protein 1 (410 aa).

WD repeat units lie at residues 22–61 (GHQD…QYWP), 66–105 (TMAS…NKMN), 112–150 (AHQN…NMLG), 153–192 (FFTS…CSVI), 197–236 (GHEG…GRTL), and 240–279 (GHHD…EEAP). The FYVE-type zinc finger occupies 281-352 (WLESDSCQKC…VCDSCYDSIK (72 aa)). Zn(2+) contacts are provided by Cys-287, Cys-290, Cys-314, Cys-317, Cys-322, Cys-325, Cys-344, and Cys-347. Residues 364-403 (EGKHNISHMSMDIARGLMVTCGTDRIVKIWDMTPVVGCSL) form a WD 7 repeat. The residue at position 408 (Ser-408) is a Phosphoserine.

As to quaternary structure, binds PtdIns3P in vitro with high specificity over other phosphoinositides. Interacts (via WD repeat 2) with tyrosine-phosphorylated TLR3 (via TIR domain) in response to poly(I:C). Interacts with TICAM1 in response to poly(I:C). Interacts with TLR4 in response to LPS.

It is found in the early endosome. Positively regulates TLR3- and TLR4-mediated signaling pathways by bridging the interaction between TLR3 or TLR4 and TICAM1. Promotes TLR3/4 ligand-induced activation of transcription factors IRF3 and NF-kappa-B, as well as the production of IFN-beta and inflammatory cytokines. The polypeptide is WD repeat and FYVE domain-containing protein 1 (WDFY1) (Homo sapiens (Human)).